A 123-amino-acid chain; its full sequence is Ribonuclease P protein component (123 aa).

The protein belongs to the RnpA family. Consists of a catalytic RNA component (M1 or rnpB) and a protein subunit.

It carries out the reaction Endonucleolytic cleavage of RNA, removing 5'-extranucleotides from tRNA precursor.. RNaseP catalyzes the removal of the 5'-leader sequence from pre-tRNA to produce the mature 5'-terminus. It can also cleave other RNA substrates such as 4.5S RNA. The protein component plays an auxiliary but essential role in vivo by binding to the 5'-leader sequence and broadening the substrate specificity of the ribozyme. The protein is Ribonuclease P protein component of Bordetella petrii (strain ATCC BAA-461 / DSM 12804 / CCUG 43448).